The following is a 437-amino-acid chain: Phosphoethanolamine N-methyltransferase 2 (437 aa).

Residues 186–187 (QY) and tyrosine 195 contribute to the N-methylethanolamine phosphate site. Residues 204–205 (IS), glycine 232, aspartate 254, 281–282 (DA), and arginine 298 each bind S-adenosyl-L-homocysteine. Residues tyrosine 329, tyrosine 343, 347–349 (RAY), and lysine 415 contribute to the N-methylethanolamine phosphate site.

The protein belongs to the class I-like SAM-binding methyltransferase superfamily.

It carries out the reaction N-methylethanolamine phosphate + S-adenosyl-L-methionine = N,N-dimethylethanolamine phosphate + S-adenosyl-L-homocysteine + H(+). The catalysed reaction is N,N-dimethylethanolamine phosphate + S-adenosyl-L-methionine = phosphocholine + S-adenosyl-L-homocysteine + H(+). Its pathway is phospholipid metabolism; phosphatidylcholine biosynthesis; phosphocholine from phosphoethanolamine. Its activity is regulated as follows. Feedback inhibition by phosphatidylcholine and also by S-adenosylhomocysteine. Its function is as follows. Catalyzes the last two methylation reactions in the synthesis of phosphocholine, by converting phospho-monomethylethanolamine (N-methylethanolamine phosphate) into phospho-dimethylethanolamine (N,N-dimethylethanolamine phosphate) and the latter into phosphocholine. Phosphocholine is a precursor for phosphatidylcholine, a major component in membranes and a precursor itself in the production of glycoconjugates secreted by parasitic nematodes to avoid host immune responses. The sequence is that of Phosphoethanolamine N-methyltransferase 2 from Caenorhabditis elegans.